A 262-amino-acid polypeptide reads, in one-letter code: Kallikrein-1 (262 aa).

A signal peptide spans 1 to 18 (MWFLVLCLALSLGGTGAA). The propeptide at 19-24 (PPIQSR) is activation peptide. In terms of domain architecture, Peptidase S1 spans 25–259 (IVGGWECEQH…YVKWIEDTIA (235 aa)). Intrachain disulfides connect Cys-31-Cys-174, Cys-50-Cys-66, Cys-153-Cys-220, Cys-185-Cys-199, and Cys-210-Cys-235. His-65 acts as the Charge relay system in catalysis. Ser-93 carries O-linked (GalNAc...) serine glycosylation. N-linked (GlcNAc...) asparagine glycosylation is present at Asn-102. Ser-104 carries O-linked (GalNAc...) serine glycosylation. A glycan (N-linked (GlcNAc...) asparagine) is linked at Asn-108. The active-site Charge relay system is the Asp-120. Asn-165 carries N-linked (GlcNAc...) asparagine; partial glycosylation. An O-linked (GalNAc...) serine glycan is attached at Ser-167. The Charge relay system role is filled by Ser-214.

It belongs to the peptidase S1 family. Kallikrein subfamily. Post-translationally, the O-linked polysaccharides on Ser-93, Ser-104 and Ser-167 are probably the mucin type linked to GalNAc. In PubMed:3163150, GalNAc was detected with the corresponding peptides but not located. Isoform 2 is expressed in pancreas, salivary glands, kidney, colon, prostate gland, testis, spleen and the colon adenocarcinoma cell line T84.

It catalyses the reaction Preferential cleavage of Arg-|-Xaa bonds in small molecule substrates. Highly selective action to release kallidin (lysyl-bradykinin) from kininogen involves hydrolysis of Met-|-Xaa or Leu-|-Xaa.. Functionally, glandular kallikreins cleave Met-Lys and Arg-Ser bonds in kininogen to release Lys-bradykinin. Its function is as follows. (Microbial infection) Cleaves Neisseria meningitidis NHBA in saliva; Neisseria is an obligate commensal of the nasopharyngeal mucosa. This Homo sapiens (Human) protein is Kallikrein-1 (KLK1).